The following is a 180-amino-acid chain: Putative 3-methyladenine DNA glycosylase (180 aa).

It belongs to the DNA glycosylase MPG family.

This chain is Putative 3-methyladenine DNA glycosylase, found in Ehrlichia chaffeensis (strain ATCC CRL-10679 / Arkansas).